The chain runs to 301 residues: Probable alpha-L-glutamate ligase 1 (301 aa).

The ATP-grasp domain occupies 104-287 (MQLMSRRGIG…VAGAIIAFIE (184 aa)). ATP is bound by residues K141, 178–179 (EY), D187, and 211–213 (RSN). 3 residues coordinate Mg(2+): D248, E260, and N262. D248, E260, and N262 together coordinate Mn(2+).

Belongs to the RimK family. Mg(2+) serves as cofactor. It depends on Mn(2+) as a cofactor.

In Shewanella amazonensis (strain ATCC BAA-1098 / SB2B), this protein is Probable alpha-L-glutamate ligase 1.